The chain runs to 757 residues: RNA exonuclease 3 (757 aa).

Disordered stretches follow at residues 56-259 (VKRE…AEHL) and 474-590 (ESLD…CDQA). Basic and acidic residues predominate over residues 120–132 (EGGRAEGAEKKEF). Polar residues-rich tracts occupy residues 145–172 (TPHA…SSVS), 202–223 (QPSS…SSPK), and 230–240 (MTTSASPSQSR). 2 stretches are compositionally biased toward low complexity: residues 244-253 (RNTSASPSSS) and 474-502 (ESLD…KTAS). Over residues 503-516 (RPASTPTKSLTSSL) the composition is skewed to polar residues. 2 stretches are compositionally biased toward basic and acidic residues: residues 543 to 557 (REPD…RGIG) and 565 to 581 (SQER…RVRE). The Exonuclease domain occupies 597-751 (VVAVDCEMLY…EDALAALDVV (155 aa)).

The protein belongs to the REXO1/REXO3 family.

Its subcellular location is the cytoplasm. The protein localises to the nucleus. Its function is as follows. 3' to 5' exoribonuclease required for proper 3' end maturation of MRP RNA and of the U5L snRNA. The polypeptide is RNA exonuclease 3 (REX3) (Yarrowia lipolytica (strain CLIB 122 / E 150) (Yeast)).